Reading from the N-terminus, the 651-residue chain is Acetyl-coenzyme A synthetase 1 (651 aa).

CoA contacts are provided by residues 191–194 (RGGK), T311, and N335. Residues 387–389 (GEP), 411–416 (DTWWQT), D500, and R515 each bind ATP. S523 serves as a coordination point for CoA. R526 lines the ATP pocket. Mg(2+)-binding residues include V537, H539, and V542. CoA is bound at residue R584. K609 carries the post-translational modification N6-acetyllysine.

This sequence belongs to the ATP-dependent AMP-binding enzyme family. Mg(2+) is required as a cofactor. In terms of processing, acetylated. Deacetylation by the SIR2-homolog deacetylase activates the enzyme.

It catalyses the reaction acetate + ATP + CoA = acetyl-CoA + AMP + diphosphate. In terms of biological role, catalyzes the conversion of acetate into acetyl-CoA (AcCoA), an essential intermediate at the junction of anabolic and catabolic pathways. AcsA undergoes a two-step reaction. In the first half reaction, AcsA combines acetate with ATP to form acetyl-adenylate (AcAMP) intermediate. In the second half reaction, it can then transfer the acetyl group from AcAMP to the sulfhydryl group of CoA, forming the product AcCoA. In Pseudomonas aeruginosa (strain ATCC 15692 / DSM 22644 / CIP 104116 / JCM 14847 / LMG 12228 / 1C / PRS 101 / PAO1), this protein is Acetyl-coenzyme A synthetase 1.